A 457-amino-acid chain; its full sequence is ATP synthase subunit beta (457 aa).

ATP is bound at residue 147 to 154; it reads GGAGVGKT.

This sequence belongs to the ATPase alpha/beta chains family. In terms of assembly, F-type ATPases have 2 components, CF(1) - the catalytic core - and CF(0) - the membrane proton channel. CF(1) has five subunits: alpha(3), beta(3), gamma(1), delta(1), epsilon(1). CF(0) has three main subunits: a(1), b(2) and c(9-12). The alpha and beta chains form an alternating ring which encloses part of the gamma chain. CF(1) is attached to CF(0) by a central stalk formed by the gamma and epsilon chains, while a peripheral stalk is formed by the delta and b chains.

It is found in the cell inner membrane. The catalysed reaction is ATP + H2O + 4 H(+)(in) = ADP + phosphate + 5 H(+)(out). Its function is as follows. Produces ATP from ADP in the presence of a proton gradient across the membrane. The catalytic sites are hosted primarily by the beta subunits. The sequence is that of ATP synthase subunit beta from Glaesserella parasuis serovar 5 (strain SH0165) (Haemophilus parasuis).